The chain runs to 159 residues: Eukaryotic translation initiation factor 5A (159 aa).

Residues M1–A12 show a composition bias toward basic and acidic residues. Positions M1–Q23 are disordered. K52 is modified (hypusine).

This sequence belongs to the eIF-5A family. Post-translationally, lys-52 undergoes hypusination, a unique post-translational modification that consists in the addition of a butylamino group from spermidine to lysine side chain, leading to the formation of the unusual amino acid hypusine. eIF-5As are the only known proteins to undergo this modification, which is essential for their function.

In terms of biological role, translation factor that promotes translation elongation and termination, particularly upon ribosome stalling at specific amino acid sequence contexts. Binds between the exit (E) and peptidyl (P) site of the ribosome and promotes rescue of stalled ribosome: specifically required for efficient translation of polyproline-containing peptides as well as other motifs that stall the ribosome. Acts as a ribosome quality control (RQC) cofactor by joining the RQC complex to facilitate peptidyl transfer during CAT tailing step. The sequence is that of Eukaryotic translation initiation factor 5A (EIFSV1) from Senecio vernalis (Spring groundsel).